The sequence spans 320 residues: TATA box-binding protein-like 2 (320 aa).

This sequence belongs to the TBP family. Expression is restricted to the gonads, and is higher in the ovary than the testis.

It is found in the nucleus. Functionally, TATA box-binding transcription factor. Members of the TBP family are differentially required to regulate transcription and development during early embryogenesis. Required for gastrulation. Regulates a large subset of genes that are ventrally expressed. Binds to a subset of promoters. The protein is TATA box-binding protein-like 2 of Xenopus laevis (African clawed frog).